Reading from the N-terminus, the 364-residue chain is Aminomethyltransferase (364 aa).

The protein belongs to the GcvT family. The glycine cleavage system is composed of four proteins: P, T, L and H.

It carries out the reaction N(6)-[(R)-S(8)-aminomethyldihydrolipoyl]-L-lysyl-[protein] + (6S)-5,6,7,8-tetrahydrofolate = N(6)-[(R)-dihydrolipoyl]-L-lysyl-[protein] + (6R)-5,10-methylene-5,6,7,8-tetrahydrofolate + NH4(+). Its function is as follows. The glycine cleavage system catalyzes the degradation of glycine. The protein is Aminomethyltransferase of Shewanella sp. (strain ANA-3).